The sequence spans 532 residues: Protein DETOXIFICATION 48 (532 aa).

12 helical membrane passes run 65 to 85, 95 to 115, 136 to 156, 174 to 194, 211 to 231, 235 to 255, 279 to 301, 322 to 342, 363 to 383, 397 to 417, 437 to 457, and 464 to 484; these read ISGPTAMTGLLMYSRAMISML, LAGGSLSIGFANITGYSVISG, LGLTLQRTVLLLLSCSVPISF, ISSVAQQFLLFAIPDLFLLSL, VTYSTAVSVLLHVPLNYLLVV, MGVAGVAIAMVLTNLNLVVLL, GWSALLSLAIPTCVSVCLEWWWY, GILIQTTALVYVFPSSLSLGV, IISLFCAIALGLMAMVFAVLV, ILQLTSIALPIVGLCELGNCP, INLGSFYFVGMPVAILFGFVF, and LWFGLLAAQATCASLMLCALL. A disordered region spans residues 496–532; that stretch reads EELTSQTPGKSPPLLPIASSKSRSTSGTEDMMRTMLV. Positions 514 to 523 are enriched in polar residues; sequence SSKSRSTSGT.

This sequence belongs to the multi antimicrobial extrusion (MATE) (TC 2.A.66.1) family. In terms of tissue distribution, highly expressed in shoot apices relative to leaves. At vegetative stages, highly expressed at the stipules. At reproductive stages, most highly expressed in the mature pollen. Also expressed in the tips of sepals.

Its subcellular location is the golgi apparatus membrane. The protein resides in the late endosome membrane. In terms of biological role, functions as a multidrug and toxin extrusion transporter. Contributes to iron homeostasis during stress responses and senescence. Could be involved in specifying the lateral organ initiation rate. May act as a negative regulator of hypocotyl cell elongation in the light. The polypeptide is Protein DETOXIFICATION 48 (Arabidopsis thaliana (Mouse-ear cress)).